A 491-amino-acid polypeptide reads, in one-letter code: Ketol-acid reductoisomerase (NADP(+)) (491 aa).

The region spanning alanine 15–serine 208 is the KARI N-terminal Rossmann domain. NADP(+) contacts are provided by residues cysteine 45–glutamine 48, arginine 68, arginine 76, serine 78, and aspartate 108–glutamine 110. Histidine 132 is an active-site residue. Glycine 158 lines the NADP(+) pocket. KARI C-terminal knotted domains lie at serine 209–glutamine 344 and tyrosine 345–methionine 484. Mg(2+) is bound by residues aspartate 217, glutamate 221, glutamate 389, and glutamate 393. Serine 414 is a substrate binding site.

The protein belongs to the ketol-acid reductoisomerase family. It depends on Mg(2+) as a cofactor.

The enzyme catalyses (2R)-2,3-dihydroxy-3-methylbutanoate + NADP(+) = (2S)-2-acetolactate + NADPH + H(+). It carries out the reaction (2R,3R)-2,3-dihydroxy-3-methylpentanoate + NADP(+) = (S)-2-ethyl-2-hydroxy-3-oxobutanoate + NADPH + H(+). The protein operates within amino-acid biosynthesis; L-isoleucine biosynthesis; L-isoleucine from 2-oxobutanoate: step 2/4. It participates in amino-acid biosynthesis; L-valine biosynthesis; L-valine from pyruvate: step 2/4. Functionally, involved in the biosynthesis of branched-chain amino acids (BCAA). Catalyzes an alkyl-migration followed by a ketol-acid reduction of (S)-2-acetolactate (S2AL) to yield (R)-2,3-dihydroxy-isovalerate. In the isomerase reaction, S2AL is rearranged via a Mg-dependent methyl migration to produce 3-hydroxy-3-methyl-2-ketobutyrate (HMKB). In the reductase reaction, this 2-ketoacid undergoes a metal-dependent reduction by NADPH to yield (R)-2,3-dihydroxy-isovalerate. In Klebsiella pneumoniae subsp. pneumoniae (strain ATCC 700721 / MGH 78578), this protein is Ketol-acid reductoisomerase (NADP(+)).